We begin with the raw amino-acid sequence, 248 residues long: Triosephosphate isomerase (248 aa).

The substrate site is built by Asn-10 and Lys-12. Residue His-95 is the Electrophile of the active site. Residue Glu-165 is the Proton acceptor of the active site.

The protein belongs to the triosephosphate isomerase family. As to quaternary structure, homodimer.

The catalysed reaction is D-glyceraldehyde 3-phosphate = dihydroxyacetone phosphate. Its pathway is carbohydrate biosynthesis; gluconeogenesis. It functions in the pathway carbohydrate degradation; glycolysis; D-glyceraldehyde 3-phosphate from glycerone phosphate: step 1/1. This Eremothecium gossypii (strain ATCC 10895 / CBS 109.51 / FGSC 9923 / NRRL Y-1056) (Yeast) protein is Triosephosphate isomerase (TPI1).